Here is a 1191-residue protein sequence, read N- to C-terminus: MARPRDSRSPSPAGSTHSSRRFRNDDRRDRDRRNDGRDHRRRTRSRSPDPRNRDRDRDRDRDRARDRDNYRRRDRSLDRRDDNHYRGGRRDNRERDRRRSRDRFDDRIRSPMTDRRRNRSRENDRDVRRRDDSRSRISGRREGTTDSPARSNRDDGRNQKTPLDDSGNGGASQAQTPKAEGGQADVDKKAERLAKLEAWKKKKESASQKQKEVNPSQTRNLLAEMDKKASGASSKTVSPSVSAIASPAATPTVESPAASYSGKFDPKAIAKKSAASRAHDASKPALGSLEGQPEKISVPVKQATTASALPANRTKASGFGFVKTNAETEKLTAKRKLDLDEEDTTKRKLTKLPALPIEADDTPYADQDDDESDGDNFAENEEEAAAAARAAHERRLQAENQMDTAEEETKPTDVETNGDVAMNNNASQPEPATQMEVDEEDDVDPLDAFMADLKQTDVRQPTKTSTTQKIQEPEAYFSDDEYDFNKKDEGDASALLAITAKRKKKDIPTIDYSKIEIEPIRKNFWHEPAELSLLTEAEVADLRLELDGIKVNGKDVPKPVQKWAQCGLTRQTLDVVDNLGYEKPTPIQMQALPALMSGRDVIGVAKTGSGKTVAFLLPMFRHIKDQPPLKDTDGPIGLIMTPTRELAVQIHKDCKPFLKMMGLRAVCAYGGAPIREQIAELKRGAEIIVCTPGRMIDLLAANQGRVTNLKRVTYVVLDEADRMFDMGFEPQVMKIFANMRPDRQTILFSATMPRIIDSLTKKVLKNPIEVTVGGRSVVAKEIEQIVEVRDEPSKFHRVLELLGELYDRDEDARTLIFVERQEKADDLLKELMMKGYPCMSIHGGKDQIDRDSTISDFKKGVVPILIATSVAARGLDVKQLKLVINYDAPNHLEDYVHRAGRTGRAGNTGVAVTFVTPEQENCAPGIAKALEQSGQPIPDRLNEMRKAHREKVKSGKAKDTSGFGGKGLDRLDQEREAARLRERKVHKAEGEEEEVTEDKKEDEDEKAEKALDAIRAAASGVLARESAKADDADAKSMPPVKTSGVVKDKAKDPLDKVSSAVSAINSRLGKAGQLRAGQPIDNKGPDAGAFHATLEINDFPQKARWAVTNRTNVAKILEATGTSITTKGNFYPAGKEVPAGAEPKLYILIEGDTEVVVSSALTELTRLLREGTIAAVDADSRAPASGRYTIT.

Residues 1–436 (MARPRDSRSP…SQPEPATQME (436 aa)) form a disordered region. 3 stretches are compositionally biased toward basic and acidic residues: residues 22 to 38 (FRNDDRRDRDRRNDGRD), 46 to 144 (RSPD…REGT), and 185 to 212 (DVDKKAERLAKLEAWKKKKESASQKQKE). A compositionally biased stretch (low complexity) spans 236–253 (TVSPSVSAIASPAATPTV). The span at 326 to 338 (AETEKLTAKRKLD) shows a compositional bias: basic and acidic residues. Residues 358 to 384 (EADDTPYADQDDDESDGDNFAENEEEA) are compositionally biased toward acidic residues. A compositionally biased stretch (polar residues) spans 422–431 (MNNNASQPEP). The Q motif signature appears at 561 to 589 (QKWAQCGLTRQTLDVVDNLGYEKPTPIQM). The region spanning 592–770 (LPALMSGRDV…KKVLKNPIEV (179 aa)) is the Helicase ATP-binding domain. 605-612 (AKTGSGKT) serves as a coordination point for ATP. The DEAD box motif lies at 718 to 721 (DEAD). Positions 801–945 (LLGELYDRDE…PIPDRLNEMR (145 aa)) constitute a Helicase C-terminal domain. Disordered regions lie at residues 946 to 1008 (KAHR…EKAE) and 1025 to 1051 (ESAKADDADAKSMPPVKTSGVVKDKAK). Residues 967–980 (GLDRLDQEREAARL) are compositionally biased toward basic and acidic residues. Positions 969 to 1018 (DRLDQEREAARLRERKVHKAEGEEEEVTEDKKEDEDEKAEKALDAIRAAA) form a coiled coil. A compositionally biased stretch (acidic residues) spans 990 to 1005 (GEEEEVTEDKKEDEDE). Residues 1025–1034 (ESAKADDADA) show a composition bias toward basic and acidic residues.

This sequence belongs to the DEAD box helicase family. DDX46/PRP5 subfamily.

Its subcellular location is the nucleus. The enzyme catalyses ATP + H2O = ADP + phosphate + H(+). In terms of biological role, ATP-dependent RNA helicase involved spliceosome assembly and in nuclear splicing. Catalyzes an ATP-dependent conformational change of U2 snRNP. Bridges U1 and U2 snRNPs and enables stable U2 snRNP association with intron RNA. This chain is Pre-mRNA-processing ATP-dependent RNA helicase PRP5 (PRP5), found in Gibberella zeae (strain ATCC MYA-4620 / CBS 123657 / FGSC 9075 / NRRL 31084 / PH-1) (Wheat head blight fungus).